We begin with the raw amino-acid sequence, 342 residues long: Immune-associated nucleotide-binding protein 9 (342 aa).

The AIG1-type G domain occupies 22–229 (NPKRTLVLVG…YSDELFHELQ (208 aa)). A G1 region spans residues 31-38 (GRTGNGKS). GTP is bound by residues 31-39 (GRTGNGKSA) and Ser-52. A G2 region spans residues 58 to 62 (GVTST). Positions 80 to 83 (DTPG) are G3. The tract at residues 149 to 152 (TGGD) is G4. The G5 stretch occupies residues 188–190 (NNK). Asn-189 lines the GTP pocket. The stretch at 276–342 (ETKLRDTAKR…QKKLGKCINL (67 aa)) forms a coiled coil.

It belongs to the TRAFAC class TrmE-Era-EngA-EngB-Septin-like GTPase superfamily. AIG1/Toc34/Toc159-like paraseptin GTPase family. IAN subfamily. In terms of tissue distribution, mainly expressed in leaves.

In Arabidopsis thaliana (Mouse-ear cress), this protein is Immune-associated nucleotide-binding protein 9.